The following is a 139-amino-acid chain: Ribosomal RNA large subunit methyltransferase H (139 aa).

S-adenosyl-L-methionine-binding positions include Leu57, Gly88, and Leu107–Phe112.

This sequence belongs to the RNA methyltransferase RlmH family. As to quaternary structure, homodimer.

The protein resides in the cytoplasm. The enzyme catalyses pseudouridine(1915) in 23S rRNA + S-adenosyl-L-methionine = N(3)-methylpseudouridine(1915) in 23S rRNA + S-adenosyl-L-homocysteine + H(+). Functionally, specifically methylates the pseudouridine at position 1915 (m3Psi1915) in 23S rRNA. This Solibacter usitatus (strain Ellin6076) protein is Ribosomal RNA large subunit methyltransferase H.